The chain runs to 311 residues: HPr kinase/phosphorylase (311 aa).

Active-site residues include H138 and K159. 153 to 160 (GKSGVGKS) contributes to the ATP binding site. S160 contacts Mg(2+). Residue D177 is the Proton acceptor; for phosphorylation activity. Proton donor; for dephosphorylation activity of the active site. The tract at residues 201 to 210 (LEIRGLGIIN) is important for the catalytic mechanism of both phosphorylation and dephosphorylation. E202 serves as a coordination point for Mg(2+). R243 is an active-site residue. An important for the catalytic mechanism of dephosphorylation region spans residues 264-269 (PVRPGR).

Belongs to the HPrK/P family. In terms of assembly, homohexamer. The cofactor is Mg(2+).

It carries out the reaction [HPr protein]-L-serine + ATP = [HPr protein]-O-phospho-L-serine + ADP + H(+). The catalysed reaction is [HPr protein]-O-phospho-L-serine + phosphate + H(+) = [HPr protein]-L-serine + diphosphate. Catalyzes the ATP- as well as the pyrophosphate-dependent phosphorylation of a specific serine residue in HPr, a phosphocarrier protein of the phosphoenolpyruvate-dependent sugar phosphotransferase system (PTS). HprK/P also catalyzes the pyrophosphate-producing, inorganic phosphate-dependent dephosphorylation (phosphorolysis) of seryl-phosphorylated HPr (P-Ser-HPr). The two antagonistic activities of HprK/P are regulated by several intracellular metabolites, which change their concentration in response to the absence or presence of rapidly metabolisable carbon sources (glucose, fructose, etc.) in the growth medium. Also phosphorylates/dephosphorylates the HPr-like catabolite repression protein crh on a specific serine residue. Therefore, by controlling the phosphorylation state of HPr and crh, HPrK/P is a sensor enzyme that plays a major role in the regulation of carbon metabolism and sugar transport: it mediates carbon catabolite repression (CCR), and regulates PTS-catalyzed carbohydrate uptake and inducer exclusion. In Geobacillus sp. (strain WCH70), this protein is HPr kinase/phosphorylase.